Reading from the N-terminus, the 466-residue chain is Peptidyl-prolyl cis-trans isomerase CYP37, chloroplastic (466 aa).

Residues 1-65 (MASPLSSSTV…GTKELIHSCN (65 aa)) constitute a chloroplast transit peptide. The N-terminal 49 residues, 66–114 (SSIDSKLNTFEAGSKNLEKLVATILIFVQVWSPLPLFGLDSAYISPAEA), are a transit peptide targeting the thylakoid. The region spanning 278-466 (TFSAEAGGDQ…VQNNNINEST (189 aa)) is the PPIase cyclophilin-type domain.

As to expression, aerial parts.

Its subcellular location is the plastid. It is found in the chloroplast thylakoid lumen. The catalysed reaction is [protein]-peptidylproline (omega=180) = [protein]-peptidylproline (omega=0). Its function is as follows. PPIases accelerate the folding of proteins. It catalyzes the cis-trans isomerization of proline imidic peptide bonds in oligopeptides. This Arabidopsis thaliana (Mouse-ear cress) protein is Peptidyl-prolyl cis-trans isomerase CYP37, chloroplastic (CYP37).